The sequence spans 827 residues: Probable inorganic carbon transporter subunit DabA2 (827 aa).

Cys351, Asp353, His524, and Cys539 together coordinate Zn(2+).

This sequence belongs to the inorganic carbon transporter (TC 9.A.2) DabA family. In terms of assembly, forms a complex with DabB2, possibly a heterodimer. Requires Zn(2+) as cofactor.

It localises to the cell inner membrane. Uptake of inorganic carbon by cells in the presence of thiosulphate is fully inhibited by the uncouplers carbonyl cyanide m-chlorophenyl hydrazone (CCCP), carbonyl cyanide p-trifluoromethoxyphenyl hydrazone (FCCP), S13 or SF6847. Not inhibited by the ATPase inhibitor N,N-dicyclohexylcarbodiimide (DCCD). Inorganic carbon uptake is inhibited by the ionophore CCCP, suggesting uptake is coupled to a cation gradient. Its function is as follows. Part of an energy-coupled inorganic carbon pump; its substrate may be carbon dioxide. Expression of both dabA2 and dabB2 (DAB2) restores growth in ambient air to E.coli deleted of its carbonic anhydrase genes (called CAfree, deletion of 'can' and 'cynT'); neither dabA2 or dabB2 alone is sufficient. Rescue is pH-independent, suggesting it transports CO(2) and not carbonate ions. Together the genes allow greater than normal uptake of inorganic carbon by E.coli. Uptake of carbon dioxide rather than bicarbonate has been suggested based on kinetic calculations. The chain is Probable inorganic carbon transporter subunit DabA2 from Halothiobacillus neapolitanus (strain ATCC 23641 / c2) (Thiobacillus neapolitanus).